A 249-amino-acid polypeptide reads, in one-letter code: UPF0309 protein GTNG_1302 (249 aa).

The region spanning 31–214 (VSKAVQNGGI…ALMAENGVEP (184 aa)) is the SIS domain.

Belongs to the UPF0309 family.

This is UPF0309 protein GTNG_1302 from Geobacillus thermodenitrificans (strain NG80-2).